The primary structure comprises 289 residues: Nitrogenase iron protein (289 aa).

8 to 15 (GKGGIGKS) lines the ATP pocket. Cysteine 96 provides a ligand contact to [4Fe-4S] cluster. The residue at position 99 (arginine 99) is an ADP-ribosylarginine; by dinitrogenase reductase ADP-ribosyltransferase. Position 130 (cysteine 130) interacts with [4Fe-4S] cluster.

It belongs to the NifH/BchL/ChlL family. Homodimer. [4Fe-4S] cluster is required as a cofactor. Post-translationally, the reversible ADP-ribosylation of Arg-99 inactivates the nitrogenase reductase and regulates nitrogenase activity.

The catalysed reaction is N2 + 8 reduced [2Fe-2S]-[ferredoxin] + 16 ATP + 16 H2O = H2 + 8 oxidized [2Fe-2S]-[ferredoxin] + 2 NH4(+) + 16 ADP + 16 phosphate + 6 H(+). In terms of biological role, the key enzymatic reactions in nitrogen fixation are catalyzed by the nitrogenase complex, which has 2 components: the iron protein and the molybdenum-iron protein. The polypeptide is Nitrogenase iron protein (Parafrankia sp. (strain EAN1pec)).